Here is a 1074-residue protein sequence, read N- to C-terminus: Insulin receptor substrate 2-A (1074 aa).

The interval 1 to 64 (MAGVLCPTEE…PPASAAEDDV (64 aa)) is disordered. 2 consecutive short sequence motifs (YXXM motif) follow at residues 33–36 (YRRM) and 145–148 (YFAM). Residues 63 to 168 (DVRKRGYLRK…WYQALSELIN (106 aa)) enclose the PH domain. The 105-residue stretch at 193 to 297 (FKEVWQVNVK…DTMKALKAYS (105 aa)) folds into the IRS-type PTB domain. Disordered stretches follow at residues 326-370 (PPSQ…RPFR), 426-461 (CSSS…SDEY), and 475-510 (SNTP…SRDD). Over residues 347–361 (SAKNNSFRFRTSSEG) the composition is skewed to polar residues. Composition is skewed to low complexity over residues 426–435 (CSSSGHGSAS) and 442–454 (SSSS…SDGG). The span at 475–504 (SNTPDSLGNTPPIQEENTLSDYMSMSTHSQ) shows a compositional bias: polar residues. Short sequence motifs (YXXM motif) lie at residues 496 to 499 (YMSM), 592 to 595 (YMPM), 605 to 608 (YLPM), 631 to 634 (YMMM), 663 to 666 (YMDM), and 710 to 713 (YVPM). Residues 801–821 (TPYSLSADGSPSSLGSSCDHR) form a disordered region. A compositionally biased stretch (low complexity) spans 804 to 817 (SLSADGSPSSLGSS). A YXXM motif 9 motif is present at residues 888–891 (YTTM).

In terms of processing, phosphorylated by INSR.

Its function is as follows. Potentiates insulin signaling. This is Insulin receptor substrate 2-A (irs2-a) from Xenopus laevis (African clawed frog).